Reading from the N-terminus, the 261-residue chain is Rho-related GTP-binding protein RhoU (261 aa).

The disordered stretch occupies residues 1–48 (MAPQQGRPALPARCEPPAAPPVPPRRERGGRGARGPGVSGGRGRAGGA). The segment covering 7-16 (RPALPARCEP) has biased composition (low complexity). Residues 32 to 48 (GARGPGVSGGRGRAGGA) show a composition bias toward gly residues. Residues 59–66 (GDGAVGKT), 106–110 (DTAGQ), and 164–167 (TQSD) contribute to the GTP site. Residues lysine 180 and lysine 251 each participate in a glycyl lysine isopeptide (Lys-Gly) (interchain with G-Cter in ubiquitin) cross-link. Residue cysteine 259 is the site of S-palmitoyl cysteine attachment.

It belongs to the small GTPase superfamily. Rho family. As to quaternary structure, interacts with PAK1. Interacts with PAK3. Interacts with ARHGAP30 in a GTP-independent manner. In its GTP-loaded conformation, interacts with ARHGAP31. Interacts with PTK2B/PYK2. Interacts with PAK4; interaction protects RHOU from ubiquitination and subsequent degradation. Requires Mg(2+) as cofactor. Post-translationally, tyrosine phosphorylated by SRC in response to PTK2B/PYK2 activation. In terms of processing, ubiquitinated. 'Lys-48'-linked ubiquitination at Lys-180 and Lys-251 by the ECS(RAB40A) complex leading to its degradation.

Its subcellular location is the cell membrane. It localises to the golgi apparatus membrane. It is found in the cell junction. The protein localises to the focal adhesion. The protein resides in the cell projection. Its subcellular location is the podosome. In terms of biological role, binds to and activates protein kinase PAK1. Plays a role in the regulation of cell morphology, cytoskeletal organization and focal adhesion assembly during cell migration. Also stimulates quiescent cells to reenter the cell cycle. Has no detectable GTPase activity but its high intrinsic guanine nucleotide exchange activity suggests it is constitutively GTP-bound. The protein is Rho-related GTP-binding protein RhoU of Mus musculus (Mouse).